The sequence spans 400 residues: Enoyl-[acyl-carrier-protein] reductase [NADH] (400 aa).

Residues 48 to 53, 74 to 75, 111 to 112, and 139 to 140 contribute to the NAD(+) site; these read GSSSGY, FE, DA, and LA. Tyr225 serves as a coordination point for substrate. Tyr235 functions as the Proton donor in the catalytic mechanism. Residues Lys244 and 273–275 each bind NAD(+); that span reads VVT.

It belongs to the TER reductase family. As to quaternary structure, monomer.

It carries out the reaction a 2,3-saturated acyl-[ACP] + NAD(+) = a (2E)-enoyl-[ACP] + NADH + H(+). Its pathway is lipid metabolism; fatty acid biosynthesis. Its function is as follows. Involved in the final reduction of the elongation cycle of fatty acid synthesis (FAS II). Catalyzes the reduction of a carbon-carbon double bond in an enoyl moiety that is covalently linked to an acyl carrier protein (ACP). This chain is Enoyl-[acyl-carrier-protein] reductase [NADH], found in Shewanella denitrificans (strain OS217 / ATCC BAA-1090 / DSM 15013).